A 350-amino-acid polypeptide reads, in one-letter code: S-adenosylmethionine:tRNA ribosyltransferase-isomerase (350 aa).

This sequence belongs to the QueA family. As to quaternary structure, monomer.

The protein localises to the cytoplasm. It carries out the reaction 7-aminomethyl-7-carbaguanosine(34) in tRNA + S-adenosyl-L-methionine = epoxyqueuosine(34) in tRNA + adenine + L-methionine + 2 H(+). The protein operates within tRNA modification; tRNA-queuosine biosynthesis. In terms of biological role, transfers and isomerizes the ribose moiety from AdoMet to the 7-aminomethyl group of 7-deazaguanine (preQ1-tRNA) to give epoxyqueuosine (oQ-tRNA). This Aliivibrio fischeri (strain MJ11) (Vibrio fischeri) protein is S-adenosylmethionine:tRNA ribosyltransferase-isomerase.